The sequence spans 100 residues: NADH-quinone oxidoreductase subunit K (100 aa).

The next 3 helical transmembrane spans lie at 4 to 24 (LSWYLLLSATLFSIGLIGFVI), 29 to 49 (IVMLMCLEIMFNAVNIAFASF), and 60 to 80 (IFVLFSIAVAACEAVIGLAIV).

This sequence belongs to the complex I subunit 4L family. In terms of assembly, NDH-1 is composed of 14 different subunits. Subunits NuoA, H, J, K, L, M, N constitute the membrane sector of the complex.

It is found in the cell inner membrane. It catalyses the reaction a quinone + NADH + 5 H(+)(in) = a quinol + NAD(+) + 4 H(+)(out). NDH-1 shuttles electrons from NADH, via FMN and iron-sulfur (Fe-S) centers, to quinones in the respiratory chain. The immediate electron acceptor for the enzyme in this species is believed to be ubiquinone. Couples the redox reaction to proton translocation (for every two electrons transferred, four hydrogen ions are translocated across the cytoplasmic membrane), and thus conserves the redox energy in a proton gradient. The protein is NADH-quinone oxidoreductase subunit K of Thermodesulfovibrio yellowstonii (strain ATCC 51303 / DSM 11347 / YP87).